Here is a 384-residue protein sequence, read N- to C-terminus: Prokineticin receptor 2 (384 aa).

At 1-54 (MAAQNGNTSFTPNFNPPQDHASSLSFNFSYGDYDLPMDEDEDMTKTRTFFAAKI) the chain is on the extracellular side. N-linked (GlcNAc...) asparagine glycosylation is found at asparagine 7 and asparagine 27. Residues 55–75 (VIGIALAGIMLVCGIGNFVFI) traverse the membrane as a helical segment. Over 76 to 89 (AALTRYKKLRNLTN) the chain is Cytoplasmic. The chain crosses the membrane as a helical span at residues 90–110 (LLIANLAISDFLVAIICCPFE). Topologically, residues 111 to 136 (MDYYVVRQLSWEHGHVLCASVNYLRT) are extracellular. Cysteine 128 and cysteine 208 are joined by a disulfide. Residues 137 to 157 (VSLYVSTNALLAIAIDRYLAI) form a helical membrane-spanning segment. The Cytoplasmic segment spans residues 158-171 (VHPLKPRMNYQTAS). A helical transmembrane segment spans residues 172–192 (FLIALVWMVSILIAIPSAYFA). Residues 193 to 223 (TETVLFIVKSQEKIFCGQIWPVDQQLYYKSY) are Extracellular-facing. Residues 224–244 (FLFIFGVEFVGPVVTMTLCYA) traverse the membrane as a helical segment. The Cytoplasmic segment spans residues 245-273 (RISRELWFKAVPGFQTEQIRKRLRCRRKT). The helical transmembrane segment at 274–294 (VLVLMCILTAYVLCWAPFYGF) threads the bilayer. The Extracellular portion of the chain corresponds to 295–313 (TIVRDFFPTVFVKEKHYLT). The helical transmembrane segment at 314-334 (AFYVVECIAMSNSMINTVCFV) threads the bilayer. Residues 335–384 (TVKNNTMKYFKKMMLLHWRPSQRGSKSSADLDLRTNGVPTTEEVDCIRLK) are Cytoplasmic-facing.

It belongs to the G-protein coupled receptor 1 family. Homodimer. In terms of tissue distribution, expressed in the ileocecum, thyroid gland, pituitary gland, salivary gland, adrenal gland, testis, ovary and brain.

The protein localises to the cell membrane. Receptor for prokineticin 2. Exclusively coupled to the G(q) subclass of heteromeric G proteins. Activation leads to mobilization of calcium, stimulation of phosphoinositide turnover and activation of p44/p42 mitogen-activated protein kinase. The sequence is that of Prokineticin receptor 2 (PROKR2) from Homo sapiens (Human).